Here is a 521-residue protein sequence, read N- to C-terminus: Maturase K (521 aa).

This sequence belongs to the intron maturase 2 family. MatK subfamily.

The protein resides in the plastid. Its subcellular location is the chloroplast. Usually encoded in the trnK tRNA gene intron. Probably assists in splicing its own and other chloroplast group II introns. The sequence is that of Maturase K from Trillium catesbaei (Catesby's trillium).